Consider the following 1250-residue polypeptide: Probable autotransporter YfaL (1250 aa).

Residues 1–28 (MRIIFLRKEYLSLLPSMIASLFSANGVA) form the signal peptide. The interval 914–951 (RSQEVTPPSPPDPDPTPDPDPTPDPDPTPDPEPTPAYQ) is disordered. The stretch at 919–920 (TP) is repeat 1. Residues 919 to 948 (TPPSPPDPDPTPDPDPTPDPDPTPDPEPTP) are 15 X 2 AA approximate tandem repeats of [DTPE]-P. The stretch at 921 to 922 (PS) is one 2; approximate repeat. The stretch at 923–924 (PP) is repeat 3. The 4; approximate repeat unit spans residues 925–926 (DP). Repeat copies occupy residues 927–928 (DP), 929–930 (TP), 931–932 (DP), 933–934 (DP), 935–936 (TP), 937–938 (DP), 939–940 (DP), 941–942 (TP), 943–944 (DP), 945–946 (EP), and 947–948 (TP). Positions 928–942 (PTPDPDPTPDPDPTP) are enriched in acidic residues. Residues 980 to 1250 (AGGDGQTLNL…AGFLSMTVKW (271 aa)) form the Autotransporter domain.

Post-translationally, an approximately 170 kDa protein is detected in the outer membrane, while a C-terminal 55 kDa fragment is detected in whole cells. The full-length putative autotransporter may be cleaved to release the mature protein from the outer membrane; Pefabloc SC, a Ser-Thr protease inhibitor prevents the appearance of the 55 kDa C--terminal fragment.

Its subcellular location is the periplasm. It localises to the secreted. The protein resides in the cell surface. It is found in the cell outer membrane. Probably an autotransporter. Upon overexpression shows increased adherence to polyvinyl chloride (PVC) plates, increased mature biofilm formation. The chain is Probable autotransporter YfaL (yfaL) from Escherichia coli (strain K12).